We begin with the raw amino-acid sequence, 310 residues long: Vomeronasal type-1 receptor 47 (310 aa).

Residues 1–16 (MNENSRLHTHSNIRNT) lie on the Extracellular side of the membrane. The helical transmembrane segment at 17 to 37 (FFSEIGIGISGNSFLLLFHII) threads the bilayer. Residues 38-49 (KFFRGHRPRLTD) lie on the Cytoplasmic side of the membrane. A helical transmembrane segment spans residues 50-70 (LPIGLLSLIHLLMLLVAAVIA). Topologically, residues 71-91 (TDIFISWRGWNDIICKFLVYL) are extracellular. Cysteine 85 and cysteine 172 are joined by a disulfide. Residues 92-114 (YRSLRGLSLCTTSMLSVLQAIIL) traverse the membrane as a helical segment. Topologically, residues 115–131 (SPRSYCLAKFKRKSSHN) are cytoplasmic. A helical membrane pass occupies residues 132-152 (ISCAIIFLSVLYMSISSHLFI). Over 153-193 (SITATLNLTMNNFLYVSQSCSLLPLSYLMQSMYSTLLVLRE) the chain is Extracellular. A glycan (N-linked (GlcNAc...) asparagine) is linked at asparagine 159. The helical transmembrane segment at 194–214 (VFLIGLMVLSTSYMVALLCMH) threads the bilayer. The Cytoplasmic segment spans residues 215–238 (RKQAQNLQGTSLSLKTAPEQRATQ). The chain crosses the membrane as a helical span at residues 239-259 (TILMLMTFFVLMSIFDSIVSS). The Extracellular segment spans residues 260 to 269 (SRAMFLDDST). A helical transmembrane segment spans residues 270–290 (CYSIYIFVMHIYATVSPFVFM). Topologically, residues 291–310 (STEKHLVNFFRSMCEWIINM) are cytoplasmic.

It belongs to the G-protein coupled receptor 1 family.

The protein localises to the cell membrane. Its function is as follows. Putative pheromone receptor implicated in the regulation of social and reproductive behavior. The polypeptide is Vomeronasal type-1 receptor 47 (Vmn1r47) (Mus musculus (Mouse)).